A 246-amino-acid chain; its full sequence is 1-(5-phosphoribosyl)-5-[(5-phosphoribosylamino)methylideneamino] imidazole-4-carboxamide isomerase (246 aa).

D8 (proton acceptor) is an active-site residue. The Proton donor role is filled by D129.

This sequence belongs to the HisA/HisF family.

It is found in the cytoplasm. It carries out the reaction 1-(5-phospho-beta-D-ribosyl)-5-[(5-phospho-beta-D-ribosylamino)methylideneamino]imidazole-4-carboxamide = 5-[(5-phospho-1-deoxy-D-ribulos-1-ylimino)methylamino]-1-(5-phospho-beta-D-ribosyl)imidazole-4-carboxamide. The protein operates within amino-acid biosynthesis; L-histidine biosynthesis; L-histidine from 5-phospho-alpha-D-ribose 1-diphosphate: step 4/9. The chain is 1-(5-phosphoribosyl)-5-[(5-phosphoribosylamino)methylideneamino] imidazole-4-carboxamide isomerase from Methylocella silvestris (strain DSM 15510 / CIP 108128 / LMG 27833 / NCIMB 13906 / BL2).